The following is a 110-amino-acid chain: B3 domain-containing protein LOC_Os02g10420 (110 aa).

The segment at residues 1–104 is a DNA-binding region (TF-B3); the sequence is MSAMLNENVP…VLSVTVHKAD (104 aa).

It localises to the nucleus. The sequence is that of B3 domain-containing protein LOC_Os02g10420 from Oryza sativa subsp. japonica (Rice).